Here is a 65-residue protein sequence, read N- to C-terminus: Putative antitoxin PF2058 (65 aa).

Belongs to the UPF0165 family.

In terms of biological role, possibly the antitoxin component of a type II toxin-antitoxin (TA) system. The sequence is that of Putative antitoxin PF2058 from Pyrococcus furiosus (strain ATCC 43587 / DSM 3638 / JCM 8422 / Vc1).